The following is a 180-amino-acid chain: MALAEDLALLVRQEEVLQFKHFDEDVAWQLGALLQRRAEAEGWLVVIDIRRFERPLFLAARPGVTPHNHDWIRRKCNTVQRFLCSSYRIGHQLAIDQKDLTQRYNLSPVDYASAGGGFPITVQGAGVIGSVAVSGLPERQDHQAIIDALCTLLGHDRAALSLAPVGKFANAKGKVVAVSG.

This sequence belongs to the UPF0303 family.

This chain is UPF0303 protein PSEEN3311, found in Pseudomonas entomophila (strain L48).